A 332-amino-acid polypeptide reads, in one-letter code: Ribosomal RNA small subunit methyltransferase H (332 aa).

S-adenosyl-L-methionine contacts are provided by residues 39-41, Asp56, Phe83, Asp100, and Gln107; that span reads GGY.

It belongs to the methyltransferase superfamily. RsmH family.

It is found in the cytoplasm. The enzyme catalyses cytidine(1402) in 16S rRNA + S-adenosyl-L-methionine = N(4)-methylcytidine(1402) in 16S rRNA + S-adenosyl-L-homocysteine + H(+). Specifically methylates the N4 position of cytidine in position 1402 (C1402) of 16S rRNA. The protein is Ribosomal RNA small subunit methyltransferase H of Bartonella tribocorum (strain CIP 105476 / IBS 506).